A 1096-amino-acid chain; its full sequence is Serine-repeat antigen protein 3 (1096 aa).

An N-terminal signal peptide occupies residues 1-21 (MARLSSIVFIICLLLCNNAIS). Positions 28 to 205 (PSSGGTLSGG…RSPPPQVNNI (178 aa)) are disordered. Residues 77-97 (NSDSTGDSSLGSTGSNGSQPA) show a composition bias toward low complexity. Asn92 carries N-linked (GlcNAc...) asparagine glycosylation. Basic and acidic residues predominate over residues 102–113 (KEPEPTTPKEPE). Residues 123–147 (VTPQKTAETASGKQVSPTPSENPPS) show a composition bias toward polar residues. Over residues 149–161 (DTPKPESSSEKKV) the composition is skewed to basic and acidic residues. 8 N-linked (GlcNAc...) asparagine glycosylation sites follow: Asn204, Asn607, Asn637, Asn662, Asn671, Asn712, Asn892, and Asn951. Disordered regions lie at residues 916-952 (EAKNDDENDQNYGNLDVSGQSENHQNDPKNPQPQANS) and 964-1006 (NQRT…ASAN). 2 stretches are compositionally biased toward polar residues: residues 925–952 (QNYGNLDVSGQSENHQNDPKNPQPQANS) and 964–975 (NQRTADSNPNAQ). Residues 976–1006 (STPSPNTTVTDTVNSNTANSNTANSNTASAN) are compositionally biased toward low complexity. Asn981 and Asn1039 each carry an N-linked (GlcNAc...) asparagine glycan.

The protein belongs to the peptidase C1 family. Proteolytically cleaved in both blood and liver stage parasites. Precursor of 130 kDa is processed into 72 kDa and 55 kDa forms. Proteolytically cleaved by SUB1.

The protein localises to the cell membrane. The protein resides in the parasitophorous vacuole. Its subcellular location is the secreted. It localises to the host cytoplasm. In terms of biological role, putative cysteine protease. Probably involved in merozoite release from the parasitophorous vacuole during liver stages. The polypeptide is Serine-repeat antigen protein 3 (Plasmodium berghei (strain Anka)).